The sequence spans 268 residues: AB hydrolase superfamily protein YisY (268 aa).

One can recognise an AB hydrolase-1 domain in the interval 23–254 (PIIFLHGWPL…NSGHGAFYEE (232 aa)). Catalysis depends on residues S96, D220, and H248.

The protein belongs to the AB hydrolase superfamily.

The sequence is that of AB hydrolase superfamily protein YisY (yisY) from Bacillus subtilis (strain 168).